We begin with the raw amino-acid sequence, 355 residues long: Protein RecA (355 aa).

65 to 72 (GPESSGKT) is an ATP binding site.

The protein belongs to the RecA family.

The protein resides in the cytoplasm. In terms of biological role, can catalyze the hydrolysis of ATP in the presence of single-stranded DNA, the ATP-dependent uptake of single-stranded DNA by duplex DNA, and the ATP-dependent hybridization of homologous single-stranded DNAs. It interacts with LexA causing its activation and leading to its autocatalytic cleavage. In Pseudomonas putida (Arthrobacter siderocapsulatus), this protein is Protein RecA.